Reading from the N-terminus, the 480-residue chain is Ribulose bisphosphate carboxylase large chain (480 aa).

A propeptide spanning residues 1–2 (MS) is cleaved from the precursor. At proline 3 the chain carries N-acetylproline. The residue at position 14 (lysine 14) is an N6,N6,N6-trimethyllysine. Positions 123 and 173 each coordinate substrate. Lysine 175 functions as the Proton acceptor in the catalytic mechanism. Lysine 177 contacts substrate. Mg(2+) is bound by residues lysine 201, aspartate 203, and glutamate 204. An N6-carboxylysine modification is found at lysine 201. The active-site Proton acceptor is the histidine 294. Positions 295, 327, and 379 each coordinate substrate.

The protein belongs to the RuBisCO large chain family. Type I subfamily. Heterohexadecamer of 8 large chains and 8 small chains; disulfide-linked. The disulfide link is formed within the large subunit homodimers. Mg(2+) serves as cofactor. Post-translationally, the disulfide bond which can form in the large chain dimeric partners within the hexadecamer appears to be associated with oxidative stress and protein turnover.

The protein resides in the plastid. Its subcellular location is the chloroplast. It carries out the reaction 2 (2R)-3-phosphoglycerate + 2 H(+) = D-ribulose 1,5-bisphosphate + CO2 + H2O. It catalyses the reaction D-ribulose 1,5-bisphosphate + O2 = 2-phosphoglycolate + (2R)-3-phosphoglycerate + 2 H(+). Functionally, ruBisCO catalyzes two reactions: the carboxylation of D-ribulose 1,5-bisphosphate, the primary event in carbon dioxide fixation, as well as the oxidative fragmentation of the pentose substrate in the photorespiration process. Both reactions occur simultaneously and in competition at the same active site. The sequence is that of Ribulose bisphosphate carboxylase large chain from Basella alba (Malabar spinach).